We begin with the raw amino-acid sequence, 452 residues long: Golgi reassembly-stacking protein 2 (452 aa).

A lipid anchor (N-myristoyl glycine) is attached at glycine 2. PDZ GRASP-type domains follow at residues 15 to 105 and 111 to 199; these read EGYH…FCSF and NVWH…YGYL. The tract at residues 15–215 is GRASP; that stretch reads EGYHVLRVQE…PFEEGKKISL (201 aa). Arginine 30 and arginine 47 each carry dimethylated arginine. The important for membrane binding stretch occupies residues 194 to 199; that stretch reads IGYGYL. At serine 214 the chain carries Phosphoserine. 2 positions are modified to phosphothreonine: threonine 222 and threonine 225. Residues 372-424 show a composition bias toward low complexity; that stretch reads PESSSAASSGELLSSLPPTSNAPSDPATTTAKADAASSLTVDVTPPTAKAPTT. The segment at 372 to 452 is disordered; the sequence is PESSSAASSG…AVDANASESP (81 aa). Serine 409 is modified (phosphoserine). A phosphothreonine mark is found at threonine 415 and threonine 433. A phosphoserine mark is found at serine 436, serine 441, serine 449, and serine 451.

The protein belongs to the GORASP family. In terms of assembly, homodimer. Homooligomer. ER stress induces phosphorylation-dependent monomerization. Interacts with BLZF1/Golgin 45. Identified in a complex with RAB2 and GORASP2. Interacts with JAM2 and JAM3. Interacts with members of the p24 cargo receptors. Interacts with CNIH1 and the cytoplasmic domain of transmembrane TGFA, prior its transit in the trans-Golgi. Interacts with KCTD5. Interacts with TMED2 and TMED3. Interacts with SEC16A in response to ER stress. Interacts (via PDZ GRASP-type 1 domain) with core-glycosylated CFTR in response to ER stress. Myristoylated. Myristoylation is essential for the Golgi targeting. In terms of processing, palmitoylated. Post-translationally, phosphorylated in mitotic cells. ER stress-induced phosphorylation at Ser-441 induces monomerization and subsequent relocalization from Golgi to ER which is essential for mediating unconventional (ER/Golgi-independent) trafficking of CFTR to the cell membrane.

It localises to the golgi apparatus membrane. The protein localises to the endoplasmic reticulum membrane. The protein resides in the golgi apparatus. In terms of biological role, key structural protein of the Golgi apparatus. The membrane cisternae of the Golgi apparatus adhere to each other to form stacks, which are aligned side by side to form the Golgi ribbon. Acting in concert with GORASP1/GRASP65, is required for the formation and maintenance of the Golgi ribbon, and may be dispensable for the formation of stacks. However, other studies suggest that GORASP2 plays a role in the assembly and membrane stacking of the Golgi cisternae, and in the process by which Golgi stacks reform after breakdown during mitosis and meiosis. May regulate the intracellular transport and presentation of a defined set of transmembrane proteins, such as transmembrane TGFA. Required for normal acrosome formation during spermiogenesis and normal male fertility, probably by promoting colocalization of JAM2 and JAM3 at contact sites between germ cells and Sertoli cells. Mediates ER stress-induced unconventional (ER/Golgi-independent) trafficking of core-glycosylated CFTR to cell membrane. This chain is Golgi reassembly-stacking protein 2 (GORASP2), found in Homo sapiens (Human).